Reading from the N-terminus, the 332-residue chain is Biotin synthase (332 aa).

The 230-residue stretch at 53 to 282 (YFGKKVKLNM…TKEIRISGGR (230 aa)) folds into the Radical SAM core domain. [4Fe-4S] cluster is bound by residues C71, C75, and C78. Positions 115, 147, 207, and 277 each coordinate [2Fe-2S] cluster.

Belongs to the radical SAM superfamily. Biotin synthase family. Homodimer. It depends on [4Fe-4S] cluster as a cofactor. Requires [2Fe-2S] cluster as cofactor.

The catalysed reaction is (4R,5S)-dethiobiotin + (sulfur carrier)-SH + 2 reduced [2Fe-2S]-[ferredoxin] + 2 S-adenosyl-L-methionine = (sulfur carrier)-H + biotin + 2 5'-deoxyadenosine + 2 L-methionine + 2 oxidized [2Fe-2S]-[ferredoxin]. Its pathway is cofactor biosynthesis; biotin biosynthesis; biotin from 7,8-diaminononanoate: step 2/2. Functionally, catalyzes the conversion of dethiobiotin (DTB) to biotin by the insertion of a sulfur atom into dethiobiotin via a radical-based mechanism. This chain is Biotin synthase, found in Bacillus thuringiensis (strain Al Hakam).